Reading from the N-terminus, the 275-residue chain is Translation initiation factor 2 subunit alpha (275 aa).

An S1 motif domain is found at 12 to 83 (GELVVATVKR…KKGHIDLSLR (72 aa)).

It belongs to the eIF-2-alpha family. As to quaternary structure, heterotrimer composed of an alpha, a beta and a gamma chain.

In terms of biological role, eIF-2 functions in the early steps of protein synthesis by forming a ternary complex with GTP and initiator tRNA. The chain is Translation initiation factor 2 subunit alpha from Pyrococcus furiosus (strain ATCC 43587 / DSM 3638 / JCM 8422 / Vc1).